Reading from the N-terminus, the 287-residue chain is U1 small nuclear ribonucleoprotein A (287 aa).

The RRM 1 domain occupies 16-95; that stretch reads HTIYINNLNE…KPMRIQYAKT (80 aa). K66 carries the N6-acetyllysine modification. The disordered stretch occupies residues 106–134; that stretch reads TYVERDRKREKRKPKSQETPAAKKAVQGG. Over residues 125-134 the composition is skewed to low complexity; it reads PAAKKAVQGG. R157 bears the Omega-N-methylarginine mark. The 75-residue stretch at 213–287 folds into the RRM 2 domain; that stretch reads HILFLTNLPE…NAMKISFAKK (75 aa).

Belongs to the RRM U1 A/B'' family. In terms of assembly, U1 snRNP is composed of the 7 core Sm proteins SNRPB, SNRPD1, SNRPD2, SNRPD3, SNRPE, SNRPF and SNRPG that assemble in a heptameric protein ring on the Sm site of the small nuclear RNA to form the core snRNP, and at least three U1 snRNP-specific proteins SNRNP70/U1-70K, SNRPA/U1-A and SNRPC/U1-C. Interacts with SFPQ; component of a snRNP-free complex with SFPQ. Interacts with IVNS1ABP (via BACK domain); the interaction is indirect.

Its subcellular location is the nucleus. Component of the spliceosomal U1 snRNP, which is essential for recognition of the pre-mRNA 5' splice-site and the subsequent assembly of the spliceosome. U1 snRNP is the first snRNP to interact with pre-mRNA. This interaction is required for the subsequent binding of U2 snRNP and the U4/U6/U5 tri-snRNP. SNRPA binds stem loop II of U1 snRNA. In a snRNP-free form (SF-A) may be involved in coupled pre-mRNA splicing and polyadenylation process. May bind preferentially to the 5'-UGCAC-3' motif on RNAs. The chain is U1 small nuclear ribonucleoprotein A (Snrpa) from Mus musculus (Mouse).